We begin with the raw amino-acid sequence, 156 residues long: MPRKGPVAKRDVLPDPLYNSKLVSRLINKMMIDGKKGKSQTILYKSFDIIKERTGNDAMEVFEQALKNIMPVLEVKARRVGGANYQVPVEVRPERRTTLGLRWLVNYARLRGEKTMEERLANEILDAANNTGAAVKKREDTHKMAEANKAFAHYRW.

This sequence belongs to the universal ribosomal protein uS7 family. Part of the 30S ribosomal subunit. Contacts proteins S9 and S11.

In terms of biological role, one of the primary rRNA binding proteins, it binds directly to 16S rRNA where it nucleates assembly of the head domain of the 30S subunit. Is located at the subunit interface close to the decoding center, probably blocks exit of the E-site tRNA. The chain is Small ribosomal subunit protein uS7 from Bacillus velezensis (strain DSM 23117 / BGSC 10A6 / LMG 26770 / FZB42) (Bacillus amyloliquefaciens subsp. plantarum).